A 97-amino-acid polypeptide reads, in one-letter code: Protein C4 (97 aa).

Disordered stretches follow at residues 1-31 and 75-97; these read MGLLTCMFSSNSKESSSVRIKDSSISHPHTG and ANLPTTHMPRQSIQGPKLRPSIY. Gly2 carries the N-myristoyl glycine; by host lipid modification. The segment covering 77–88 has biased composition (polar residues); the sequence is LPTTHMPRQSIQ.

This sequence belongs to the geminiviridae protein AC4/C4 family.

Its subcellular location is the host cell membrane. Functionally, pathogenicity determinant. May act as a suppressor of RNA-mediated gene silencing, also known as post-transcriptional gene silencing (PTGS), a mechanism of plant viral defense that limits the accumulation of viral RNAs. The chain is Protein C4 from Tomato yellow leaf curl China virus (TYLCCNV).